The chain runs to 163 residues: UPF0416 protein RBE_0909 (163 aa).

This sequence belongs to the UPF0416 family.

The sequence is that of UPF0416 protein RBE_0909 from Rickettsia bellii (strain RML369-C).